We begin with the raw amino-acid sequence, 750 residues long: Photosystem I P700 chlorophyll a apoprotein A1 (750 aa).

8 consecutive transmembrane segments (helical) span residues 70-93, 156-179, 195-219, 291-309, 346-369, 385-411, 433-455, and 531-549; these read VFSA…FHGA, LYTT…FHYH, LNHH…HVSL, TAHH…GHMY, WHAQ…HHMY, LSLF…IFMV, AIIS…LYIH, and FLVH…LILL. Residues Cys573 and Cys582 each coordinate [4Fe-4S] cluster. The next 2 membrane-spanning stretches (helical) occupy residues 589-610 and 664-686; these read HVFL…HFSW and LSAY…MFLF. His675 lines the chlorophyll a' pocket. 2 residues coordinate chlorophyll a: Met683 and Tyr691. Trp692 provides a ligand contact to phylloquinone. Residues 724 to 744 traverse the membrane as a helical segment; the sequence is AVGVAHYLLGGIATTWAFFLA.

It belongs to the PsaA/PsaB family. In terms of assembly, the PsaA/B heterodimer binds the P700 chlorophyll special pair and subsequent electron acceptors. PSI consists of a core antenna complex that captures photons, and an electron transfer chain that converts photonic excitation into a charge separation. The eukaryotic PSI reaction center is composed of at least 11 subunits. The cofactor is P700 is a chlorophyll a/chlorophyll a' dimer, A0 is one or more chlorophyll a, A1 is one or both phylloquinones and FX is a shared 4Fe-4S iron-sulfur center..

The protein resides in the plastid. Its subcellular location is the chloroplast thylakoid membrane. It carries out the reaction reduced [plastocyanin] + hnu + oxidized [2Fe-2S]-[ferredoxin] = oxidized [plastocyanin] + reduced [2Fe-2S]-[ferredoxin]. Functionally, psaA and PsaB bind P700, the primary electron donor of photosystem I (PSI), as well as the electron acceptors A0, A1 and FX. PSI is a plastocyanin-ferredoxin oxidoreductase, converting photonic excitation into a charge separation, which transfers an electron from the donor P700 chlorophyll pair to the spectroscopically characterized acceptors A0, A1, FX, FA and FB in turn. Oxidized P700 is reduced on the lumenal side of the thylakoid membrane by plastocyanin. The protein is Photosystem I P700 chlorophyll a apoprotein A1 of Physcomitrium patens (Spreading-leaved earth moss).